The primary structure comprises 245 residues: Adenosylcobinamide-GDP ribazoletransferase (245 aa).

The next 6 membrane-spanning stretches (helical) occupy residues 35–55 (WFPL…ALGL), 108–128 (IGAF…IGAH), 137–157 (GVLI…AALV), 176–196 (IAIG…TPVM), 197–217 (TTVT…HLAR), and 222–242 (INGD…LLAA).

This sequence belongs to the CobS family. The cofactor is Mg(2+).

It localises to the cell inner membrane. The enzyme catalyses alpha-ribazole + adenosylcob(III)inamide-GDP = adenosylcob(III)alamin + GMP + H(+). It carries out the reaction alpha-ribazole 5'-phosphate + adenosylcob(III)inamide-GDP = adenosylcob(III)alamin 5'-phosphate + GMP + H(+). It participates in cofactor biosynthesis; adenosylcobalamin biosynthesis; adenosylcobalamin from cob(II)yrinate a,c-diamide: step 7/7. In terms of biological role, joins adenosylcobinamide-GDP and alpha-ribazole to generate adenosylcobalamin (Ado-cobalamin). Also synthesizes adenosylcobalamin 5'-phosphate from adenosylcobinamide-GDP and alpha-ribazole 5'-phosphate. The sequence is that of Adenosylcobinamide-GDP ribazoletransferase from Nitratidesulfovibrio vulgaris (strain DP4) (Desulfovibrio vulgaris).